Here is a 259-residue protein sequence, read N- to C-terminus: 5'-nucleotidase SurE (259 aa).

Residues Asp-11, Asp-12, Ser-42, and Asn-99 each contribute to the a divalent metal cation site.

The protein belongs to the SurE nucleotidase family. It depends on a divalent metal cation as a cofactor.

The protein resides in the cytoplasm. It carries out the reaction a ribonucleoside 5'-phosphate + H2O = a ribonucleoside + phosphate. Nucleotidase that shows phosphatase activity on nucleoside 5'-monophosphates. This chain is 5'-nucleotidase SurE, found in Cytophaga hutchinsonii (strain ATCC 33406 / DSM 1761 / CIP 103989 / NBRC 15051 / NCIMB 9469 / D465).